The following is a 484-amino-acid chain: Ribosome biogenesis protein YTM1 (484 aa).

The ubiquitin-like (UBL) domain stretch occupies residues 11-94 (VKVLFTTTEQ…EKTVTLQYVR (84 aa)). WD repeat units follow at residues 121-160 (SSAGKWSGSSFLQGQDRILSASYDGLLRIWNGSGQALATS), 166-204 (GPLCGLKSAKFMSSTKIAAAGLDRTVRIWDYTEADDHFS), 215-254 (GHRSIIESLGVDGSSRRILTACADGSIGLWTTSKKLAPEA), 289-329 (VHSR…VVST), 331-372 (TTSN…AATS), 378-418 (GHIN…PAAG), and 448-484 (GEGVKVFDVQWDKTWGIVSGGEDKKVQINKGRNIISS).

The protein belongs to the WD repeat WDR12/YTM1 family. Component of the NOP7 complex, composed of ERB1, NOP7 and YTM1. The complex is held together by ERB1, which interacts with NOP7 via its N-terminal domain and with YTM1 via a high-affinity interaction between the seven-bladed beta-propeller domains of the 2 proteins. The NOP7 complex associates with the 66S pre-ribosome. Interacts (via UBL domain) with MDN1 (via VWFA/MIDAS domain).

It is found in the nucleus. Its subcellular location is the nucleolus. It localises to the nucleoplasm. In terms of biological role, component of the NOP7 complex, which is required for maturation of the 25S and 5.8S ribosomal RNAs and formation of the 60S ribosome. This chain is Ribosome biogenesis protein YTM1, found in Pyricularia oryzae (strain 70-15 / ATCC MYA-4617 / FGSC 8958) (Rice blast fungus).